The sequence spans 31 residues: Glucagon-3 (31 aa).

It belongs to the glucagon family.

Its subcellular location is the secreted. Its function is as follows. Glucagon plays a key role in glucose metabolism and homeostasis. Regulates blood glucose by increasing gluconeogenesis and decreasing glycolysis. This Huso dauricus (Kaluga sturgeon) protein is Glucagon-3.